A 410-amino-acid polypeptide reads, in one-letter code: TNF receptor-associated factor family protein DDB_G0279745 (410 aa).

The segment at 27 to 67 (CVICSFPLFDGLQCKRGHGACKSCWEKIIGENGKKECHSCR) adopts an RING-type; degenerate zinc-finger fold. 2 consecutive TRAF-type zinc fingers follow at residues 81–154 (YLEK…SLEQ) and 154–213 (QHQN…DESI). Residues 216–284 (LSNSIVEIQK…SMINKLDDSA (69 aa)) are a coiled coil.

The protein belongs to the TNF receptor-associated factor family.

Its subcellular location is the cytoplasm. In terms of biological role, probable adapter protein and signal transducer that links members of the tumor necrosis factor receptor family to different signaling pathways by association with the receptor cytoplasmic domain and kinases. In Dictyostelium discoideum (Social amoeba), this protein is TNF receptor-associated factor family protein DDB_G0279745.